Here is a 306-residue protein sequence, read N- to C-terminus: D-alanine--D-alanine ligase B (306 aa).

One can recognise an ATP-grasp domain in the interval K101–E303. Position 134-189 (I134–T189) interacts with ATP. D257, E270, and N272 together coordinate Mg(2+).

It belongs to the D-alanine--D-alanine ligase family. Monomer. Mg(2+) serves as cofactor. The cofactor is Mn(2+).

The protein resides in the cytoplasm. It catalyses the reaction 2 D-alanine + ATP = D-alanyl-D-alanine + ADP + phosphate + H(+). The protein operates within cell wall biogenesis; peptidoglycan biosynthesis. Its function is as follows. Cell wall formation. The sequence is that of D-alanine--D-alanine ligase B (ddlB) from Salmonella typhimurium (strain LT2 / SGSC1412 / ATCC 700720).